The chain runs to 188 residues: Elongation factor P (188 aa).

It belongs to the elongation factor P family.

The protein resides in the cytoplasm. The protein operates within protein biosynthesis; polypeptide chain elongation. Involved in peptide bond synthesis. Stimulates efficient translation and peptide-bond synthesis on native or reconstituted 70S ribosomes in vitro. Probably functions indirectly by altering the affinity of the ribosome for aminoacyl-tRNA, thus increasing their reactivity as acceptors for peptidyl transferase. The polypeptide is Elongation factor P (Chlorobium phaeobacteroides (strain DSM 266 / SMG 266 / 2430)).